The chain runs to 223 residues: MSAQLLILSHVVLLQLIVAQLGPKIGKQFLKPKQCEITNQTVYDFHAQMLNGAQRSLTEYRNKVLLIVNVATYCAYTMQYRDFNPILGSNSNGTLNILGFPCNQFYLQEPAENHELLNGLKYVRPGHGWEPHKNMHIFGKLEVNGENDHPLYKFLKERCPPTVPVIGKRHQLIYDPIGTNDVIWNFEKFLVDKKGRPRYRFHPENWVQGTAVKPYIDELEREI.

Residues 1–19 (MSAQLLILSHVVLLQLIVA) form the signal peptide. N-linked (GlcNAc...) asparagine glycosylation occurs at asparagine 39. The active site involves cysteine 74. Residue asparagine 92 is glycosylated (N-linked (GlcNAc...) asparagine).

It belongs to the glutathione peroxidase family. Homotetramer.

It localises to the secreted. The catalysed reaction is 2 glutathione + H2O2 = glutathione disulfide + 2 H2O. Could inhibit the oxidative burst of leukocytes and neutralize the secondary products of lipid peroxidation, thus providing the resistance of these parasites to immune effector mechanisms and their persistence in the mammalian host. It may also be involved in the formation of cross-linking residues such as dityrosine, trityrosine and isotrityrosine identified in cuticular collagen. Highly cross-linked external cortex may also serve to protect the parasite from immune attack. This chain is Cuticular glutathione peroxidase, found in Wuchereria bancrofti.